The following is a 323-amino-acid chain: MISPSFRKGMLKERVMDLASQTTILPLLFGCLGIFSLFRLLQRIRSKAYLRNAVVVVTGATSGLGRECAKVFHAAGAKLVLCGRNVKALEELSRELAGSSQGQTHQPFVVTFDLADPGTIAAAAAEILQCFGYVDVLINNAGISYRGTISDTIVDVDRKVMEINYFGPVALTKALLPSMVERKQGHIVAISSIQGKISIPFRSAYSASKHATQAFFDCLRAEMEEANIKVTVISPGYIHTNLSVNAVTADGSRYGALDKNTAQGRSAAEVAQDVFDAVGKKKKDVLLTDFVPSMAVYIRTLAPGLFFRIMASRARKERKSKSS.

At 1 to 17 (MISPSFRKGMLKERVMD) the chain is on the cytoplasmic side. The helical; Signal-anchor for type II membrane protein transmembrane segment at 18–38 (LASQTTILPLLFGCLGIFSLF) threads the bilayer. At 39–323 (RLLQRIRSKA…ARKERKSKSS (285 aa)) the chain is on the lumenal side. Residues S62 and L64 each coordinate NAD(+). S192 contacts substrate. NAD(+) contacts are provided by Y205, K209, and T240. The active-site Proton acceptor is the Y205.

This sequence belongs to the short-chain dehydrogenases/reductases (SDR) family.

It is found in the endoplasmic reticulum membrane. In terms of biological role, putative oxidoreductase. The polypeptide is Dehydrogenase/reductase SDR family member 7B (Mus musculus (Mouse)).